Consider the following 277-residue polypeptide: Ribosomal RNA small subunit methyltransferase A (277 aa).

S-adenosyl-L-methionine is bound by residues N23, L25, G50, E75, D98, and N121.

This sequence belongs to the class I-like SAM-binding methyltransferase superfamily. rRNA adenine N(6)-methyltransferase family. RsmA subfamily.

Its subcellular location is the cytoplasm. It catalyses the reaction adenosine(1518)/adenosine(1519) in 16S rRNA + 4 S-adenosyl-L-methionine = N(6)-dimethyladenosine(1518)/N(6)-dimethyladenosine(1519) in 16S rRNA + 4 S-adenosyl-L-homocysteine + 4 H(+). Its function is as follows. Specifically dimethylates two adjacent adenosines (A1518 and A1519) in the loop of a conserved hairpin near the 3'-end of 16S rRNA in the 30S particle. May play a critical role in biogenesis of 30S subunits. This is Ribosomal RNA small subunit methyltransferase A from Paraburkholderia xenovorans (strain LB400).